Consider the following 145-residue polypeptide: Large ribosomal subunit protein bL19 (145 aa).

It belongs to the bacterial ribosomal protein bL19 family.

In terms of biological role, this protein is located at the 30S-50S ribosomal subunit interface and may play a role in the structure and function of the aminoacyl-tRNA binding site. In Brachyspira hyodysenteriae (strain ATCC 49526 / WA1), this protein is Large ribosomal subunit protein bL19.